A 367-amino-acid chain; its full sequence is MVMEVGTLDAGGLRALLGERAAQCLLLDCRSFFAFNAGHIAGSVNVRFSTIVRRRAKGAMGLEHIVPNAELRGRLLAGAYHAVVLLDERSAALDGAKRDGTLALAAGALCREARAAQVFFLKGGYEAFSASCPELCSKQSTPMGLSLPLSTSVPDSAESGCSSCSTPLYDQGGPVEILPFLYLGSAYHASRKDMLDALGITALINVSANCPNHFEGHYQYKSIPVEDNHKADISSWFNEAIDFIDSIKNAGGRVFVHCQAGISRSATICLAYLMRTNRVKLDEAFEFVKQRRSIISPNFSFMGQLLQFESQVLAPHCSAEAGSPAMAVLDRGTSTTTVFNFPVSIPVHSTNSALSYLQSPITTSPSC.

The 118-residue stretch at 20-137 (RAAQCLLLDC…FSASCPELCS (118 aa)) folds into the Rhodanese domain. One can recognise a Tyrosine-protein phosphatase domain in the interval 173–314 (GPVEILPFLY…LLQFESQVLA (142 aa)). Catalysis depends on Cys258, which acts as the Phosphocysteine intermediate. Residues Ser359 and Ser364 each carry the phosphoserine; by MAPK1 and MAPK3 modification.

Belongs to the protein-tyrosine phosphatase family. Non-receptor class dual specificity subfamily. In terms of processing, phosphorylation at Ser-359 and Ser-364 by MAPK1/ERK2 and MAPK3/ERK1 reduces its rate of degradation. Post-translationally, 'Lys-48'-linked polyubiquitinated by NEURL3, leading to proteasomal degradation. As to expression, expressed at high levels in the lung, liver placenta and pancreas. Moderate levels seen in the heart and skeletal muscle. Lower levels found in the brain and kidney.

The protein resides in the nucleus. The enzyme catalyses O-phospho-L-tyrosyl-[protein] + H2O = L-tyrosyl-[protein] + phosphate. The catalysed reaction is O-phospho-L-seryl-[protein] + H2O = L-seryl-[protein] + phosphate. It catalyses the reaction O-phospho-L-threonyl-[protein] + H2O = L-threonyl-[protein] + phosphate. In terms of biological role, dual specificity phosphatase that dephosphorylates MAP kinase MAPK1/ERK2 on both 'Thr-183' and 'Tyr-185', regulating its activity during the meiotic cell cycle. The protein is Dual specificity protein phosphatase 1 of Homo sapiens (Human).